The chain runs to 1087 residues: Collagen alpha-2(I) chain (1087 aa).

Residues 1–931 (APDPGPGPMG…PGPAGGGYDV (931 aa)) are disordered. Composition is skewed to low complexity over residues 83–120 (EPGA…AAGP), 150–159 (EPGPNGAVGP), and 166–187 (PGNN…AGAP). Over residues 189–199 (FPGPRGGPGPQ) the composition is skewed to pro residues. Positions 201–211 (PQGAAGQRGLA) are enriched in low complexity. A compositionally biased stretch (gly residues) spans 218–227 (GVKGDGGPKG). 5 stretches are compositionally biased toward low complexity: residues 228–241 (EPGN…PGPQ), 278–321 (AAGP…AGPS), 335–345 (PRGQPGNLGFP), 360–384 (KGAT…TGAT), and 396–408 (QGAA…QGLP). Residues 409-418 (GPAGGAGEAG) are compositionally biased toward gly residues. Low complexity predominate over residues 443-453 (NPGAAGASGPQ). The span at 466-493 (GTDGGKGEPGAAGAAGGPGHQGPGGMPG) shows a compositional bias: gly residues. The segment covering 504-515 (KGEKGEAGHRGP) has biased composition (basic and acidic residues). 3 stretches are compositionally biased toward low complexity: residues 560 to 602 (PAGA…TGAR), 613 to 640 (FPGA…PAGK), and 677 to 695 (PGPA…LGLQ). Residues 708-717 (GSPGGAGAVG) show a composition bias toward gly residues. Low complexity-rich tracts occupy residues 718 to 740 (EPGR…LGLP) and 776 to 788 (PGSS…AGAP). Over residues 792–812 (GPSGGAGRGNRGESGPGGAAG) the composition is skewed to gly residues. Residues 813-828 (AVGPAGARGAAGPSGP) show a composition bias toward low complexity. The segment covering 829–843 (RGEKGVAGEKGERGL) has biased composition (basic and acidic residues). 2 stretches are compositionally biased toward low complexity: residues 849–868 (LQGM…AGPN) and 897–909 (APGA…YVGP). The segment covering 910–924 (AGPPGSPGLPGPPGP) has biased composition (pro residues). In terms of domain architecture, Fibrillar collagen NC1 spans 929-1087 (YDVSGYDEYR…GLDLGPVCFK (159 aa)).

Belongs to the fibrillar collagen family.

The protein localises to the secreted. Its subcellular location is the extracellular space. It localises to the extracellular matrix. This is Collagen alpha-2(I) chain from Epinephelus costae (Goldblotch grouper).